Here is a 760-residue protein sequence, read N- to C-terminus: uncharacterized protein (760 aa).

A signal peptide spans Met1–Ala23. Residue Cys24 is the site of N-palmitoyl cysteine attachment. The S-diacylglycerol cysteine moiety is linked to residue Cys24. 2 disordered regions span residues Ala220–Asn262 and Tyr443–Ser482. 2 stretches are compositionally biased toward polar residues: residues Gly222–Ala257 and Pro448–Gln472.

The protein belongs to the MG185/MG260 family.

It localises to the cell membrane. This is an uncharacterized protein from Mycoplasma pneumoniae (strain ATCC 29342 / M129 / Subtype 1) (Mycoplasmoides pneumoniae).